Consider the following 452-residue polypeptide: Cell division protein FtsZ (452 aa).

Residues 24 to 28 (GAGSN), 111 to 113 (GTG), E142, R146, and D190 contribute to the GTP site.

This sequence belongs to the FtsZ family. As to quaternary structure, homodimer. Polymerizes to form a dynamic ring structure in a strictly GTP-dependent manner. Interacts directly with several other division proteins.

The protein localises to the cytoplasm. Functionally, essential cell division protein that forms a contractile ring structure (Z ring) at the future cell division site. The regulation of the ring assembly controls the timing and the location of cell division. One of the functions of the FtsZ ring is to recruit other cell division proteins to the septum to produce a new cell wall between the dividing cells. Binds GTP and shows GTPase activity. This Rickettsia typhi (strain ATCC VR-144 / Wilmington) protein is Cell division protein FtsZ.